A 155-amino-acid chain; its full sequence is D-aminoacyl-tRNA deacylase (155 aa).

The short motif at 137–138 (GP) is the Gly-cisPro motif, important for rejection of L-amino acids element.

This sequence belongs to the DTD family. As to quaternary structure, homodimer.

It is found in the cytoplasm. It carries out the reaction glycyl-tRNA(Ala) + H2O = tRNA(Ala) + glycine + H(+). It catalyses the reaction a D-aminoacyl-tRNA + H2O = a tRNA + a D-alpha-amino acid + H(+). Functionally, an aminoacyl-tRNA editing enzyme that deacylates mischarged D-aminoacyl-tRNAs. Also deacylates mischarged glycyl-tRNA(Ala), protecting cells against glycine mischarging by AlaRS. Acts via tRNA-based rather than protein-based catalysis; rejects L-amino acids rather than detecting D-amino acids in the active site. By recycling D-aminoacyl-tRNA to D-amino acids and free tRNA molecules, this enzyme counteracts the toxicity associated with the formation of D-aminoacyl-tRNA entities in vivo and helps enforce protein L-homochirality. This is D-aminoacyl-tRNA deacylase from Paracidovorax citrulli (strain AAC00-1) (Acidovorax citrulli).